The chain runs to 582 residues: Protein NARROW LEAF 1 (582 aa).

Disordered stretches follow at residues 1-26 and 531-582; these read MKPSDDKAQLSGLAQSEESSLDVDHQ and GMSP…DLEK. A compositionally biased stretch (basic and acidic residues) spans 562–572; that stretch reads LGDREPKRLRS. A Nuclear localization signal motif is present at residues 567-573; the sequence is PKRLRSD. Residues 573–582 are compositionally biased toward low complexity; it reads DSGSSLDLEK.

As to expression, expressed in leaf sheaths, leaf blades, culms and panicles. Preferentially expressed in vascular tissues in leaves and culms.

Its subcellular location is the nucleus. It is found in the nucleoplasm. It localises to the cytoplasm. In terms of biological role, involved in the regulation of lateral leaf growth. May be involved in the regulation of basipetal polar auxin transport (PAT) and vascular patterning in leaves. Controls photosynthesis rate by regulating carboxylation efficiency and consequently photosynthesis rate. Controls panicle and spikelet numbers, and grain yield. This Oryza sativa subsp. japonica (Rice) protein is Protein NARROW LEAF 1.